Reading from the N-terminus, the 248-residue chain is Triosephosphate isomerase (248 aa).

9–11 (NWK) contributes to the substrate binding site. Catalysis depends on H92, which acts as the Electrophile. The active-site Proton acceptor is E164. Substrate-binding positions include G170, S209, and 230 to 231 (GG).

Belongs to the triosephosphate isomerase family. In terms of assembly, homodimer.

It localises to the cytoplasm. It carries out the reaction D-glyceraldehyde 3-phosphate = dihydroxyacetone phosphate. The protein operates within carbohydrate biosynthesis; gluconeogenesis. Its pathway is carbohydrate degradation; glycolysis; D-glyceraldehyde 3-phosphate from glycerone phosphate: step 1/1. In terms of biological role, involved in the gluconeogenesis. Catalyzes stereospecifically the conversion of dihydroxyacetone phosphate (DHAP) to D-glyceraldehyde-3-phosphate (G3P). In Thiobacillus denitrificans (strain ATCC 25259 / T1), this protein is Triosephosphate isomerase.